The chain runs to 98 residues: NADH-ubiquinone oxidoreductase chain 4L (98 aa).

Helical transmembrane passes span 2 to 22 (PSIS…MLVF), 29 to 49 (SLLC…LFIM), and 61 to 81 (ILLL…LVMV).

Belongs to the complex I subunit 4L family. Core subunit of respiratory chain NADH dehydrogenase (Complex I) which is composed of 45 different subunits.

The protein resides in the mitochondrion inner membrane. The enzyme catalyses a ubiquinone + NADH + 5 H(+)(in) = a ubiquinol + NAD(+) + 4 H(+)(out). Functionally, core subunit of the mitochondrial membrane respiratory chain NADH dehydrogenase (Complex I) which catalyzes electron transfer from NADH through the respiratory chain, using ubiquinone as an electron acceptor. Part of the enzyme membrane arm which is embedded in the lipid bilayer and involved in proton translocation. This Lepilemur mitsinjoensis (Mitsinjo sportive lemur) protein is NADH-ubiquinone oxidoreductase chain 4L (MT-ND4L).